A 161-amino-acid polypeptide reads, in one-letter code: Lipid droplet assembly factor 1 (161 aa).

Over 1–43 the chain is Cytoplasmic; sequence MAEEEPSSVSRDLQELQRKLGLLLESFQNNSKVVAFMKSPVGR. Residues 44–61 form a helical membrane-spanning segment; sequence FLDRHPFLVLTVLMFVTM. The Lumenal portion of the chain corresponds to 62 to 67; sequence SAIPVG. The helical transmembrane segment at 68 to 87 threads the bilayer; that stretch reads FFLLIVVLTSLGALMGAILL. The Cytoplasmic segment spans residues 88-93; the sequence is EGLVIS. The helical transmembrane segment at 94-110 threads the bilayer; it reads VCGLSLLCILCGLGFVS. Residues 111 to 116 lie on the Lumenal side of the membrane; sequence LALSGI. The chain crosses the membrane as a helical span at residues 117 to 133; the sequence is TMMSYVVVSCLMSYWFS. Residues 134 to 161 lie on the Cytoplasmic side of the membrane; it reads PSRPPTQQHANIDSQLAMKFTESEKLGL.

This sequence belongs to the LDAF1 family. Interacts with BSCL2/seipin to form an oligomeric complex.

Its subcellular location is the endoplasmic reticulum membrane. It is found in the lipid droplet. Its function is as follows. Plays an important role in the formation of lipid droplets (LD) which are storage organelles at the center of lipid and energy homeostasis. In association with BSCL2/seipin, defines the sites of LD formation in the endoplasmic reticulum. This Rattus norvegicus (Rat) protein is Lipid droplet assembly factor 1.